Consider the following 195-residue polypeptide: MEINTHNAEILLSAANKSHYPQDDIPEIALAGRSNVGKSSFINTLLNRKNLARTSGKPGKTQLLNFFNIDDKLRFVDVPGYGYARVSKKEREKWGRMIEEYLTSRENLRAVVSLVDLRHDPSADDVQMYEFLKYYDIPVILVATKADKIPRGKWNKHESAIKKKLDFDKNDDFILFSSVTKDGLDAAWDAILSKI.

The EngB-type G domain maps to 24-195; it reads DIPEIALAGR…AAWDAILSKI (172 aa). Residues 32–39, 59–63, 77–80, 144–147, and 176–178 each bind GTP; these read GRSNVGKS, GKTQL, DVPG, TKAD, and FSS. The Mg(2+) site is built by Ser39 and Thr61.

The protein belongs to the TRAFAC class TrmE-Era-EngA-EngB-Septin-like GTPase superfamily. EngB GTPase family. It depends on Mg(2+) as a cofactor.

Necessary for normal cell division and for the maintenance of normal septation. The sequence is that of Probable GTP-binding protein EngB from Streptococcus sanguinis (strain SK36).